A 215-amino-acid polypeptide reads, in one-letter code: Probable transaldolase (215 aa).

K83 serves as the catalytic Schiff-base intermediate with substrate.

Belongs to the transaldolase family. Type 3B subfamily.

Its subcellular location is the cytoplasm. It carries out the reaction D-sedoheptulose 7-phosphate + D-glyceraldehyde 3-phosphate = D-erythrose 4-phosphate + beta-D-fructose 6-phosphate. It functions in the pathway carbohydrate degradation; pentose phosphate pathway; D-glyceraldehyde 3-phosphate and beta-D-fructose 6-phosphate from D-ribose 5-phosphate and D-xylulose 5-phosphate (non-oxidative stage): step 2/3. In terms of biological role, transaldolase is important for the balance of metabolites in the pentose-phosphate pathway. The chain is Probable transaldolase from Clostridium perfringens (strain ATCC 13124 / DSM 756 / JCM 1290 / NCIMB 6125 / NCTC 8237 / Type A).